Reading from the N-terminus, the 362-residue chain is 3-isopropylmalate dehydrogenase (362 aa).

NAD(+) is bound at residue 78–91; that stretch reads GPQWDTLPSDKRPE. 4 residues coordinate substrate: Arg98, Arg108, Arg136, and Asp226. 3 residues coordinate Mg(2+): Asp226, Asp250, and Asp254. NAD(+) is bound at residue 284–296; that stretch reads GSAPDIAGQDKAN.

It belongs to the isocitrate and isopropylmalate dehydrogenases family. LeuB type 1 subfamily. In terms of assembly, homodimer. Mg(2+) is required as a cofactor. Mn(2+) serves as cofactor.

The protein resides in the cytoplasm. The catalysed reaction is (2R,3S)-3-isopropylmalate + NAD(+) = 4-methyl-2-oxopentanoate + CO2 + NADH. Its pathway is amino-acid biosynthesis; L-leucine biosynthesis; L-leucine from 3-methyl-2-oxobutanoate: step 3/4. Functionally, catalyzes the oxidation of 3-carboxy-2-hydroxy-4-methylpentanoate (3-isopropylmalate) to 3-carboxy-4-methyl-2-oxopentanoate. The product decarboxylates to 4-methyl-2 oxopentanoate. The polypeptide is 3-isopropylmalate dehydrogenase (Gloeobacter violaceus (strain ATCC 29082 / PCC 7421)).